Consider the following 758-residue polypeptide: 5-methyltetrahydropteroyltriglutamate--homocysteine methyltransferase (758 aa).

5-methyltetrahydropteroyltri-L-glutamate-binding positions include 16–19 (RELK) and lysine 112. L-homocysteine contacts are provided by residues 433–435 (IGS) and glutamate 486. L-methionine contacts are provided by residues 433–435 (IGS) and glutamate 486. 5-methyltetrahydropteroyltri-L-glutamate contacts are provided by residues 517–518 (RC) and tryptophan 563. Aspartate 601 contributes to the L-homocysteine binding site. Aspartate 601 is a binding site for L-methionine. Glutamate 607 serves as a coordination point for 5-methyltetrahydropteroyltri-L-glutamate. 3 residues coordinate Zn(2+): histidine 643, cysteine 645, and glutamate 667. The active-site Proton donor is the histidine 696. Cysteine 728 is a binding site for Zn(2+).

It belongs to the vitamin-B12 independent methionine synthase family. It depends on Zn(2+) as a cofactor.

The enzyme catalyses 5-methyltetrahydropteroyltri-L-glutamate + L-homocysteine = tetrahydropteroyltri-L-glutamate + L-methionine. It functions in the pathway amino-acid biosynthesis; L-methionine biosynthesis via de novo pathway; L-methionine from L-homocysteine (MetE route): step 1/1. Functionally, catalyzes the transfer of a methyl group from 5-methyltetrahydrofolate to homocysteine resulting in methionine formation. The chain is 5-methyltetrahydropteroyltriglutamate--homocysteine methyltransferase from Neisseria meningitidis serogroup C (strain 053442).